A 114-amino-acid chain; its full sequence is C-X-C motif chemokine 5 (114 aa).

A signal peptide spans 1-36 (MSLLSSRAARVPGPSSSLCALLVLLLLLTQPGPIAS). Cystine bridges form between cysteine 49–cysteine 75 and cysteine 51–cysteine 91.

It belongs to the intercrine alpha (chemokine CxC) family. In terms of assembly, monomer. Homodimer. In terms of processing, N-terminal processed forms ENA-78(8-78) and ENA-78(9-78) are produced by proteolytic cleavage after secretion from peripheral blood monocytes.

It is found in the secreted. In terms of biological role, involved in neutrophil activation. In vitro, ENA-78(8-78) and ENA-78(9-78) show a threefold higher chemotactic activity for neutrophil granulocytes. This Homo sapiens (Human) protein is C-X-C motif chemokine 5 (CXCL5).